A 218-amino-acid polypeptide reads, in one-letter code: Nonsense-mediated decay protein 4 (218 aa).

The protein localises to the cytoplasm. Functionally, involved in nonsense-mediated decay of mRNAs containing premature stop codons. This Saccharomyces cerevisiae (strain ATCC 204508 / S288c) (Baker's yeast) protein is Nonsense-mediated decay protein 4 (NMD4).